We begin with the raw amino-acid sequence, 492 residues long: Serine/threonine protein phosphatase 2A 57 kDa regulatory subunit B' theta isoform (492 aa).

Residues 1 to 63 (MWKQILSKLP…GFKEGNLKGN (63 aa)) form a disordered region. Positions 16 to 39 (KNHSSSSSSTSKSSDNGASKSGNS) are enriched in low complexity. The Microbody targeting signal signature appears at 490-492 (SSL).

Belongs to the phosphatase 2A regulatory subunit B56 family. In terms of assembly, PP2A consists of a common heteromeric enzyme, composed of a catalytic subunit (subunits C), a constant regulatory subunit (subunit A), and a variety of regulatory subunits such as subunits B (the R2/B/PR55/B55, R3/B''/PR72/PR130/PR59 and R5/B'/B56 families). Interacts with BZR1. Interacts with PP2A2, PP2A5 and PP2AA2. As to expression, highly expressed in dry seeds. Expressed in roots, cotyledons, rosette leaves and flowers.

It localises to the cytoplasm. It is found in the cytosol. The protein resides in the peroxisome. The B regulatory subunit may modulate substrate selectivity and catalytic activity, and may also direct the localization of the catalytic enzyme to a particular subcellular compartment. Associates with the serine/threonine-protein phosphatase PP2A catalytic subunit C and regulatory subunit A to positively regulates beta-oxidation of fatty acids and protoauxins in peroxisomes by dephosphorylating peroxisomal beta-oxidation-related proteins. Required for the formation of the PP2A holoenzyme that negatively regulates brassinosteroid signaling by dephosphorylating and inactivating BRI1 in the cytoplasm. The chain is Serine/threonine protein phosphatase 2A 57 kDa regulatory subunit B' theta isoform (B'THETA) from Arabidopsis thaliana (Mouse-ear cress).